Consider the following 901-residue polypeptide: HTH-type transcriptional regulator MalT (901 aa).

Residue Ser-39 to Thr-46 participates in ATP binding. One can recognise an HTH luxR-type domain in the interval Glu-829–Leu-894. The H-T-H motif DNA-binding region spans Asn-853 to Arg-872.

It belongs to the MalT family. Monomer in solution. Oligomerizes to an active state in the presence of the positive effectors ATP and maltotriose.

Activated by ATP and maltotriose, which are both required for DNA binding. Functionally, positively regulates the transcription of the maltose regulon whose gene products are responsible for uptake and catabolism of malto-oligosaccharides. Specifically binds to the promoter region of its target genes, recognizing a short DNA motif called the MalT box. This Escherichia coli (strain ATCC 8739 / DSM 1576 / NBRC 3972 / NCIMB 8545 / WDCM 00012 / Crooks) protein is HTH-type transcriptional regulator MalT.